We begin with the raw amino-acid sequence, 187 residues long: Putative AgrB-like protein 1 (187 aa).

The next 5 membrane-spanning stretches (helical) occupy residues 29–49, 50–70, 81–98, 103–120, and 149–169; these read VVIV…IAGI, LGYF…KPFI, CFIA…LVTF, LFSI…IYNK, and ILFL…TITW.

This sequence belongs to the AgrB family.

The protein localises to the cell membrane. In terms of biological role, may be involved in the proteolytic processing of a quorum sensing system signal molecule precursor. The polypeptide is Putative AgrB-like protein 1 (Clostridium perfringens (strain 13 / Type A)).